The chain runs to 379 residues: 1-deoxy-D-xylulose 5-phosphate reductoisomerase (379 aa).

NADPH is bound by residues Thr10, Gly11, Ser12, Ile13, Arg38, Asn39, and Asn121. 1-deoxy-D-xylulose 5-phosphate is bound at residue Lys122. Residue Glu123 coordinates NADPH. Residue Asp147 participates in Mn(2+) binding. Positions 148, 149, 173, and 196 each coordinate 1-deoxy-D-xylulose 5-phosphate. Glu149 is a binding site for Mn(2+). Gly202 provides a ligand contact to NADPH. Positions 209, 214, 215, and 218 each coordinate 1-deoxy-D-xylulose 5-phosphate. Position 218 (Glu218) interacts with Mn(2+).

The protein belongs to the DXR family. It depends on Mg(2+) as a cofactor. Requires Mn(2+) as cofactor.

The catalysed reaction is 2-C-methyl-D-erythritol 4-phosphate + NADP(+) = 1-deoxy-D-xylulose 5-phosphate + NADPH + H(+). It participates in isoprenoid biosynthesis; isopentenyl diphosphate biosynthesis via DXP pathway; isopentenyl diphosphate from 1-deoxy-D-xylulose 5-phosphate: step 1/6. Its function is as follows. Catalyzes the NADPH-dependent rearrangement and reduction of 1-deoxy-D-xylulose-5-phosphate (DXP) to 2-C-methyl-D-erythritol 4-phosphate (MEP). The chain is 1-deoxy-D-xylulose 5-phosphate reductoisomerase from Chlamydia trachomatis serovar L2 (strain ATCC VR-902B / DSM 19102 / 434/Bu).